Consider the following 605-residue polypeptide: MTTGYESVPTSEPSDNLAPRAELWQRHLLEKKEGDQSISVSAFNISSMHNELSGLSEKSRQRVEAVWAAFSEASCSERKLALQGILNNCSSSLLSFASSTLDSLVRLDFLSLLPVEISFRILSFLDARSLCQAAQVSKHWKELADDDVIWHRMCEQHINRKCEKCGWGLPLLERNTLYAAKASIQKRYERLTKRGVDQAHESSPVKKAKLDDYPTSSNEETISSVKPPSPNSDSKFFLPFKTRPWKEVYAERCRVECNWRHGRCRQVVLSGHSDGVMCLQLVRNILASGSYDATIRLWNLATFQQVALLEGHSSGVTCLQFDQCKLISGSMDKTIRIWNYRTSECISILHGHTDSVLCLTFDSTLLVSGSADCTVKLWHFSGGKRITLRGHTGPVNSVRIIRDRGLVLSGSDDSTIKIWSLETNTCLHTFSAHIGPVQSLALADSRLFSCSLDGTIKQWDIEKKKCVHTLFGHIEGVWEIAADHLRLISGAHDGVVKVWEACECVHTLKNHSEPVTSVALGDCEVVSGSEDGKIYLWLFNNAPNESPVSTQSVPISSLNGQRSNSSVQRALSSVPNYSSSLSNISTRNLNIPPSNANNDDVSIQS.

The F-box domain maps to 107–153 (LDFLSLLPVEISFRILSFLDARSLCQAAQVSKHWKELADDDVIWHRM). Basic and acidic residues predominate over residues 195–212 (GVDQAHESSPVKKAKLDD). The interval 195–231 (GVDQAHESSPVKKAKLDDYPTSSNEETISSVKPPSPN) is disordered. Residues 214–231 (PTSSNEETISSVKPPSPN) show a composition bias toward polar residues. 2 positions are modified to phosphoserine: serine 229 and serine 232. WD repeat units follow at residues 271 to 299 (GHSDGVMCLQLVRNILASGSYDATIRLWN), 311 to 339 (GHSSGVTCLQFDQCKLISGSMDKTIRIWN), 350 to 379 (HGHTDSVLCLTFDSTLLVSGSADCTVKLWH), 390 to 420 (GHTGPVNSVRIIRDRGLVLSGSDDSTIKIWS), 432 to 460 (AHIGPVQSLALADSRLFSCSLDGTIKQWD), 472 to 500 (GHIEGVWEIAADHLRLISGAHDGVVKVWE), and 510 to 538 (NHSEPVTSVALGDCEVVSGSEDGKIYLWL).

In terms of assembly, a part of the E3 ubiquitin ligase Skp1-Cullin-1-F-box (SCF) complex. Interacts with cul1, skp1 and phosphorylated zip1.

It localises to the nucleus. Functionally, probably recognizes and binds to some phosphorylated proteins and promotes their ubiquitination and degradation. Required for the inactivation of zip1 via ubiquitination. This is F-box/WD repeat-containing protein pof1 (pof1) from Schizosaccharomyces pombe (strain 972 / ATCC 24843) (Fission yeast).